Reading from the N-terminus, the 183-residue chain is Outer membrane protein H.8 (183 aa).

The signal sequence occupies residues 1–17; that stretch reads MKAYLALISAAVIGLAA. A lipid anchor (N-palmitoyl cysteine) is attached at cysteine 18. Residue cysteine 18 is the site of S-diacylglycerol cysteine attachment. The disordered stretch occupies residues 27–51; sequence AEATPAGEAPASEAPAAEAAPADAA. In terms of domain architecture, Plastocyanin-like spans 57 to 183; the sequence is GNCAATVESN…LMNGKVTLVD (127 aa). Cu cation-binding residues include histidine 102, cysteine 166, histidine 171, and methionine 175.

Cu cation is required as a cofactor.

It is found in the cell outer membrane. This Neisseria gonorrhoeae protein is Outer membrane protein H.8.